Here is a 412-residue protein sequence, read N- to C-terminus: CCA-adding enzyme (412 aa).

Residues Ser-41 and Lys-44 each contribute to the ATP site. Ser-41 and Lys-44 together coordinate CTP. Asp-53, Asp-55, and Asp-106 together coordinate Mg(2+). Residues His-129, Lys-149, and Tyr-158 each contribute to the ATP site. CTP contacts are provided by His-129, Lys-149, and Tyr-158.

It belongs to the tRNA nucleotidyltransferase/poly(A) polymerase family. Archaeal CCA-adding enzyme subfamily. As to quaternary structure, homodimer. Requires Mg(2+) as cofactor.

It catalyses the reaction a tRNA precursor + 2 CTP + ATP = a tRNA with a 3' CCA end + 3 diphosphate. The enzyme catalyses a tRNA with a 3' CCA end + 2 CTP + ATP = a tRNA with a 3' CCACCA end + 3 diphosphate. Catalyzes the addition and repair of the essential 3'-terminal CCA sequence in tRNAs without using a nucleic acid template. Adds these three nucleotides in the order of C, C, and A to the tRNA nucleotide-73, using CTP and ATP as substrates and producing inorganic pyrophosphate. tRNA 3'-terminal CCA addition is required both for tRNA processing and repair. Also involved in tRNA surveillance by mediating tandem CCA addition to generate a CCACCA at the 3' terminus of unstable tRNAs. While stable tRNAs receive only 3'-terminal CCA, unstable tRNAs are marked with CCACCA and rapidly degraded. The chain is CCA-adding enzyme from Saccharolobus solfataricus (strain ATCC 35092 / DSM 1617 / JCM 11322 / P2) (Sulfolobus solfataricus).